Consider the following 325-residue polypeptide: tRNA N(3)-methylcytidine methyltransferase Mettl2 (325 aa).

The S-adenosyl-L-methionine site is built by W96 and Y100. S-adenosyl-L-homocysteine contacts are provided by Y100, H112, E138, G140, D165, D191, and I212. S-adenosyl-L-methionine contacts are provided by G140, D165, D191, and I212.

It belongs to the methyltransferase superfamily. METL family. In terms of assembly, interacts with Psn. Widely expressed. Expressed in ovaries, head, thorax and abdomen of adult flies, and in the CNS of third instar larvae. Isoform 2 is predominantly expressed in larvae and in adult tissues that have been tested.

In terms of biological role, probable methyltransferase. The sequence is that of tRNA N(3)-methylcytidine methyltransferase Mettl2 from Drosophila melanogaster (Fruit fly).